We begin with the raw amino-acid sequence, 481 residues long: Glutamate--cysteine ligase (481 aa).

It belongs to the glutamate--cysteine ligase type 1 family. Type 1 subfamily.

The catalysed reaction is L-cysteine + L-glutamate + ATP = gamma-L-glutamyl-L-cysteine + ADP + phosphate + H(+). Its pathway is sulfur metabolism; glutathione biosynthesis; glutathione from L-cysteine and L-glutamate: step 1/2. This Clostridium acetobutylicum (strain ATCC 824 / DSM 792 / JCM 1419 / IAM 19013 / LMG 5710 / NBRC 13948 / NRRL B-527 / VKM B-1787 / 2291 / W) protein is Glutamate--cysteine ligase.